We begin with the raw amino-acid sequence, 592 residues long: Sodium- and chloride-dependent transporter XTRP3A (592 aa).

Residues 1–7 (MEKARPQ) are Cytoplasmic-facing. The chain crosses the membrane as a helical span at residues 8-28 (WGHPLQFVFACISYAVGLGNV). The Extracellular segment spans residues 29–42 (WRFPYLCQMYGGGS). The chain crosses the membrane as a helical span at residues 43 to 63 (FLVPYIIMLIVEGMPLLYLEL). The Cytoplasmic segment spans residues 64-79 (AVGQRMRQGSIGAWRT). Residues 80-100 (ISPYLSGVGVASVVVSFFLSM) form a helical membrane-spanning segment. Over 101 to 165 (YYNVINAWGF…ISPSIQENGG (65 aa)) the chain is Extracellular. Asn-131 is a glycosylation site (N-linked (GlcNAc...) asparagine). The chain crosses the membrane as a helical span at residues 166 to 186 (VQWEPALCLTLAWLMVYLCIL). Over 187 to 194 (RGTESTGK) the chain is Cytoplasmic. A helical membrane pass occupies residues 195–215 (VVYFTASMPYCVLIIYLVRGL). The Extracellular portion of the chain corresponds to 216–241 (TLHGATNGLMYMFTPKMEQLANPKAW). A helical membrane pass occupies residues 242-262 (INAATQIFFSLGLGFGSLIAF). Residues 263–276 (ASYNEPSNNCQKHA) lie on the Cytoplasmic side of the membrane. Residues 277 to 297 (IIVSIINSSTSIFASIVTFSI) form a helical membrane-spanning segment. Residues 298–389 (YGFKATFNYE…EAIKNMEVSQ (92 aa)) are Extracellular-facing. Residues 390-410 (LWSVLYFFMLLMLGIGSMLGN) traverse the membrane as a helical segment. At 411-431 (TAAILTPLTDSKVISSYLPKE) the chain is on the cytoplasmic side. Residues 432–452 (AISGLVCLINCAVGMVFTMEA) traverse the membrane as a helical segment. At 453 to 465 (GNYWFDIFNDYAA) the chain is on the extracellular side. A helical membrane pass occupies residues 466–486 (TLSLLLIVLVETIAVCYVYGL). Residues 487–504 (KRFESDLRAMTGRTLSWY) lie on the Cytoplasmic side of the membrane. A helical membrane pass occupies residues 505 to 525 (WKVMWAFVSPLLIVGLFIFYL). Residues 526–554 (SDYILTGTLQYQAWDATQGQLVTKDYPPH) lie on the Extracellular side of the membrane. Residues 555-575 (ALAVIGLLVASSTMCIPLVAL) traverse the membrane as a helical segment. The Cytoplasmic portion of the chain corresponds to 576-592 (GTFIRNRLKRGGSAPVA).

The protein belongs to the sodium:neurotransmitter symporter (SNF) (TC 2.A.22) family. SLC6A20 subfamily. As to expression, expressed in brain, kidney, small intestine, thymus, spleen and lung. In the brain, expressed in cerebellum, cortex and brain stem. Not detected in liver, muscle or heart. In brain, widespread in various regions, including the meninges, choroid plexus, cortex, hippocampus and thalamus.

The protein localises to the apical cell membrane. It carries out the reaction L-proline(out) + chloride(out) + 2 Na(+)(out) = L-proline(in) + chloride(in) + 2 Na(+)(in). The enzyme catalyses 4-hydroxy-L-proline(out) + chloride(out) + 2 Na(+)(out) = 4-hydroxy-L-proline(in) + chloride(in) + 2 Na(+)(in). It catalyses the reaction 2-methyl-2-(methylamino)propanoate(out) + chloride(out) + 2 Na(+)(out) = 2-methyl-2-(methylamino)propanoate(in) + chloride(in) + 2 Na(+)(in). The catalysed reaction is L-pipecolate(out) + chloride(out) + 2 Na(+)(out) = L-pipecolate(in) + chloride(in) + 2 Na(+)(in). It carries out the reaction glycine betaine(out) + chloride(out) + 2 Na(+)(out) = glycine betaine(in) + chloride(in) + 2 Na(+)(in). The enzyme catalyses glycine(out) + chloride(out) + 2 Na(+)(out) = glycine(in) + chloride(in) + 2 Na(+)(in). Its function is as follows. Mediates the Na(+)- and Cl(-)-dependent uptake of imino acids such as L-proline, N-methyl-L-proline and pipecolate as well as N-methylated amino acids. Also transports glycine, regulates proline and glycine homeostasis in the brain playing a role in the modulation of NMDAR currents. The protein is Sodium- and chloride-dependent transporter XTRP3A of Mus musculus (Mouse).